The following is a 246-amino-acid chain: 3-deoxy-manno-octulosonate cytidylyltransferase (246 aa).

It belongs to the KdsB family.

The protein localises to the cytoplasm. The enzyme catalyses 3-deoxy-alpha-D-manno-oct-2-ulosonate + CTP = CMP-3-deoxy-beta-D-manno-octulosonate + diphosphate. It participates in nucleotide-sugar biosynthesis; CMP-3-deoxy-D-manno-octulosonate biosynthesis; CMP-3-deoxy-D-manno-octulosonate from 3-deoxy-D-manno-octulosonate and CTP: step 1/1. Its pathway is bacterial outer membrane biogenesis; lipopolysaccharide biosynthesis. Its function is as follows. Activates KDO (a required 8-carbon sugar) for incorporation into bacterial lipopolysaccharide in Gram-negative bacteria. The sequence is that of 3-deoxy-manno-octulosonate cytidylyltransferase from Leptospira borgpetersenii serovar Hardjo-bovis (strain JB197).